A 211-amino-acid chain; its full sequence is Phosphoheptose isomerase (211 aa).

One can recognise an SIS domain in the interval isoleucine 50–leucine 211. Substrate is bound at residue asparagine 65–glycine 67. 2 residues coordinate Zn(2+): histidine 74 and glutamate 78. Residues glutamate 78, asparagine 109–aspartate 110, serine 135–serine 137, serine 140, and glutamine 188 each bind substrate. Positions 188 and 196 each coordinate Zn(2+).

It belongs to the SIS family. GmhA subfamily. Zn(2+) is required as a cofactor.

The protein localises to the cytoplasm. The enzyme catalyses 2 D-sedoheptulose 7-phosphate = D-glycero-alpha-D-manno-heptose 7-phosphate + D-glycero-beta-D-manno-heptose 7-phosphate. The protein operates within carbohydrate biosynthesis; D-glycero-D-manno-heptose 7-phosphate biosynthesis; D-glycero-alpha-D-manno-heptose 7-phosphate and D-glycero-beta-D-manno-heptose 7-phosphate from sedoheptulose 7-phosphate: step 1/1. Functionally, catalyzes the isomerization of sedoheptulose 7-phosphate in D-glycero-D-manno-heptose 7-phosphate. The protein is Phosphoheptose isomerase of Pelodictyon phaeoclathratiforme (strain DSM 5477 / BU-1).